The chain runs to 1066 residues: Vinculin (1066 aa).

The interval Met-1–Phe-835 is N-terminal globular head. Phosphoserine is present on Ser-97. Residues Met-168–Ala-208 form a talin-interaction region. Lys-173 is subject to N6-acetyllysine. Tandem repeats lie at residues Ala-259 to Asn-369, Ala-370 to Arg-479, and Ala-480 to Glu-589. A 3 X 112 AA tandem repeats region spans residues Ala-259 to Glu-589. 6 positions are modified to phosphoserine: Ser-260, Ser-272, Ser-275, Ser-290, Ser-346, and Ser-434. Residue Lys-496 is modified to N6-acetyllysine. Tyr-537 carries the phosphotyrosine modification. 3 positions are modified to phosphoserine: Ser-574, Ser-579, and Ser-600. Phosphothreonine occurs at positions 604 and 672. Ser-721 bears the Phosphoserine mark. The tract at residues Met-741 to Leu-764 is interaction with ACTN4. A phosphoserine mark is found at Ser-795 and Ser-809. At Tyr-822 the chain carries Phosphotyrosine. Residues Gln-836 to Pro-878 form a linker (Pro-rich) region. Positions Glu-857–Glu-887 are disordered. Residues Pro-860–Pro-876 show a composition bias toward pro residues. Residues Glu-879–Gln-1066 form a C-terminal tail region. Facilitates phospholipid membrane insertion stretches follow at residues Arg-935–Arg-978 and Ala-1052–Gln-1066. Position 1065 is a phosphotyrosine; by SRC-type Tyr-kinases (Tyr-1065).

This sequence belongs to the vinculin/alpha-catenin family. Exhibits self-association properties. Part of a complex composed of THSD1, PTK2/FAK1, TLN1 and VCL. Interacts with APBB1IP, NRAP and TLN1. Interacts with SYNM. Interacts with CTNNB1 and this interaction is necessary for its localization to the cell-cell junctions and for its function in regulating cell surface expression of E-cadherin. Interacts with SORBS1. Interacts with SYNM. Interacts with CTNNA1. Binds to ACTN4; this interaction triggers conformational changes. Interacts with FLII. Post-translationally, phosphorylated; on serines, threonines and tyrosines. Phosphorylation on Tyr-1065 in activated platelets affects head-tail interactions and cell spreading but has no effect on actin binding nor on localization to focal adhesion plaques. In terms of processing, acetylated; mainly by myristic acid but also by a small amount of palmitic acid.

The protein resides in the cell membrane. The protein localises to the cell junction. It is found in the adherens junction. Its subcellular location is the focal adhesion. It localises to the cytoplasm. The protein resides in the cytoskeleton. The protein localises to the sarcolemma. It is found in the cell projection. Its subcellular location is the podosome. Actin filament (F-actin)-binding protein involved in cell-matrix adhesion and cell-cell adhesion. Regulates cell-surface E-cadherin expression and potentiates mechanosensing by the E-cadherin complex. May also play important roles in cell morphology and locomotion. This Mus musculus (Mouse) protein is Vinculin (Vcl).